We begin with the raw amino-acid sequence, 158 residues long: Transcription elongation factor GreA (158 aa).

Residues 46-66 are a coiled coil; sequence AEYEAAKERQGFIEGRISELE.

Belongs to the GreA/GreB family.

In terms of biological role, necessary for efficient RNA polymerase transcription elongation past template-encoded arresting sites. The arresting sites in DNA have the property of trapping a certain fraction of elongating RNA polymerases that pass through, resulting in locked ternary complexes. Cleavage of the nascent transcript by cleavage factors such as GreA or GreB allows the resumption of elongation from the new 3'terminus. GreA releases sequences of 2 to 3 nucleotides. This is Transcription elongation factor GreA from Neisseria meningitidis serogroup B (strain ATCC BAA-335 / MC58).